A 628-amino-acid chain; its full sequence is Propionate--CoA ligase (628 aa).

It belongs to the ATP-dependent AMP-binding enzyme family.

It catalyses the reaction propanoate + ATP + CoA = propanoyl-CoA + AMP + diphosphate. The protein operates within organic acid metabolism; propanoate degradation. Functionally, catalyzes the synthesis of propionyl-CoA from propionate and CoA. Also converts acetate to acetyl-CoA but with a lower specific activity. This is Propionate--CoA ligase (prpE) from Escherichia coli (strain K12).